We begin with the raw amino-acid sequence, 272 residues long: MSSYLQEARTKAVTIPSLLAMKERGEKITMLTAYDASFASMMDTCGVEMILIGDSLGMVCQGHNSTLPVTIEDVAYHTACVARGSKTAFVMSDMPFGSYATKEEAFKNAVKLVQAGAQMVKIEGGAWMADTVRFLTERAIPVMVHLGLTPQFVHQFGGYKVQGKTAEAAEKMKSEALLLQEAGADMLLLEAIPASLGKELTELVKMPTIGIGAGPDCSGQVLVLHDYINVFPGKKARFVRNFMEGQTSIEGATRAYVAAVKDGSFPAPEHCF.

Residues Asp54 and Asp93 each coordinate Mg(2+). Residues 54–55, Asp93, and Lys121 each bind 3-methyl-2-oxobutanoate; that span reads DS. Glu123 lines the Mg(2+) pocket. The Proton acceptor role is filled by Glu190.

It belongs to the PanB family. As to quaternary structure, homodecamer; pentamer of dimers. It depends on Mg(2+) as a cofactor.

It localises to the cytoplasm. The catalysed reaction is 3-methyl-2-oxobutanoate + (6R)-5,10-methylene-5,6,7,8-tetrahydrofolate + H2O = 2-dehydropantoate + (6S)-5,6,7,8-tetrahydrofolate. The protein operates within cofactor biosynthesis; (R)-pantothenate biosynthesis; (R)-pantoate from 3-methyl-2-oxobutanoate: step 1/2. Catalyzes the reversible reaction in which hydroxymethyl group from 5,10-methylenetetrahydrofolate is transferred onto alpha-ketoisovalerate to form ketopantoate. The polypeptide is 3-methyl-2-oxobutanoate hydroxymethyltransferase (Janthinobacterium sp. (strain Marseille) (Minibacterium massiliensis)).